A 167-amino-acid chain; its full sequence is UPF0262 protein Nwi_0248 (167 aa).

It belongs to the UPF0262 family.

This is UPF0262 protein Nwi_0248 from Nitrobacter winogradskyi (strain ATCC 25391 / DSM 10237 / CIP 104748 / NCIMB 11846 / Nb-255).